Here is a 107-residue protein sequence, read N- to C-terminus: UPF0473 protein LACR_0139 (107 aa).

This sequence belongs to the UPF0473 family.

In Lactococcus lactis subsp. cremoris (strain SK11), this protein is UPF0473 protein LACR_0139.